The chain runs to 181 residues: Large ribosomal subunit protein uL5 (181 aa).

It belongs to the universal ribosomal protein uL5 family. In terms of assembly, part of the 50S ribosomal subunit; part of the 5S rRNA/L5/L18/L25 subcomplex. Contacts the 5S rRNA and the P site tRNA. Forms a bridge to the 30S subunit in the 70S ribosome.

Functionally, this is one of the proteins that bind and probably mediate the attachment of the 5S RNA into the large ribosomal subunit, where it forms part of the central protuberance. In the 70S ribosome it contacts protein S13 of the 30S subunit (bridge B1b), connecting the 2 subunits; this bridge is implicated in subunit movement. Contacts the P site tRNA; the 5S rRNA and some of its associated proteins might help stabilize positioning of ribosome-bound tRNAs. The polypeptide is Large ribosomal subunit protein uL5 (Campylobacter hominis (strain ATCC BAA-381 / DSM 21671 / CCUG 45161 / LMG 19568 / NCTC 13146 / CH001A)).